Consider the following 321-residue polypeptide: D-alanine--D-alanine ligase (321 aa).

The region spanning 121–315 is the ATP-grasp domain; it reads RIWFLTNNIN…FTNLIEEIIK (195 aa). Residue 147–199 participates in ATP binding; sequence PMKRPYVIKPLTQGSSIGVEVIFAEDDFNFADYDFPYGDQVIIEQYIKGRELQ. Residues Glu268, Glu282, and Asn284 each contribute to the Mg(2+) site.

The protein belongs to the D-alanine--D-alanine ligase family. The cofactor is Mg(2+). Mn(2+) serves as cofactor.

It localises to the cytoplasm. It carries out the reaction 2 D-alanine + ATP = D-alanyl-D-alanine + ADP + phosphate + H(+). Its pathway is cell wall biogenesis; peptidoglycan biosynthesis. Its function is as follows. Cell wall formation. The chain is D-alanine--D-alanine ligase from Rickettsia rickettsii (strain Iowa).